Consider the following 138-residue polypeptide: Oleosin G (138 aa).

The next 3 helical transmembrane spans lie at 14–34 (ILGF…TGLT), 48–68 (VLIF…VAVA), and 69–89 (GFLS…WLYN). Residues 47–58 (PVLIFFSPILIP) carry the Proline-knot motif.

It belongs to the oleosin family. In terms of tissue distribution, expressed in megagametophytes (at protein level).

The protein localises to the lipid droplet. Its subcellular location is the membrane. This chain is Oleosin G, found in Pinus massoniana (Chinese red pine).